A 180-amino-acid chain; its full sequence is Probable chorismate pyruvate-lyase (180 aa).

Arginine 82, leucine 120, and glutamate 165 together coordinate substrate.

Belongs to the UbiC family.

The protein resides in the cytoplasm. It carries out the reaction chorismate = 4-hydroxybenzoate + pyruvate. It functions in the pathway cofactor biosynthesis; ubiquinone biosynthesis. In terms of biological role, removes the pyruvyl group from chorismate, with concomitant aromatization of the ring, to provide 4-hydroxybenzoate (4HB) for the ubiquinone pathway. This is Probable chorismate pyruvate-lyase from Aliivibrio fischeri (strain ATCC 700601 / ES114) (Vibrio fischeri).